Consider the following 635-residue polypeptide: MKITELLTKHTIKLNIESKEKENVIDEMVTVLDKAGKLNDRQAYKEAILNRESQSSTGIGEGIAIPHAKTASVINPAIAFGRSKDGVDYESLDGQPAHLVFMIAATEGANNTHLEALSRLSTLLMREEIRKQLLEAESEDAIIDIINQHDKDDDEEEEEEEAAPAPAGKGKILAVTACPTGIAHTFMAADALKEKAKELGVEIKVETNGSSGIKHKLTAQEIEDAPAIIVAADKQVEMERFKGKRVLQVPVTAGIRRPQELIEKAMNQDAPIYQGSGGGSAASNDDEEAKGKSGSGIGNTFYKHLMSGVSNMLPFVVGGGILVAISFFWGIHSADPNDPSYNTFAAALNFIGGDNALKLIVAVLAGFIAMSIADRPGFAPGMVGGFMATQANAGFLGGLIAGFLAGYVVILLKKVFTFIPQSLDGLKPVLIYPLFGIFITGVLMQFVVNTPVAAFMNFLTNWLESLGTGNLVLMGIILGGMMAIDMGGPLNKAAFTFGIAMIDAGNYAPHAAIMAGGMVPPLGIALATTIFRNKFTQRDREAGITCYFMGAAFVTEGAIPFAAADPLRVIPAAVVGAAVAGGLTEFFRVTLPAPHGGVFVAFITNHPMLYLLSIVIGAVVMAIILGIVKKPVTEK.

The region spanning E5–H149 is the PTS EIIA type-2 domain. The active-site Tele-phosphohistidine intermediate; for EIIA activity is the H67. H67 carries the phosphohistidine; by HPr modification. The interval H149–G168 is disordered. Residues D152 to A162 show a composition bias toward acidic residues. A PTS EIIB type-2 domain is found at I172–N267. The active-site Phosphocysteine intermediate; for EIIB activity is C178. C178 is modified (phosphocysteine; by EIIA). The interval Y273–S293 is disordered. Residues F301–K635 form the PTS EIIC type-2 domain. 9 consecutive transmembrane segments (helical) span residues M312–H332, F350–M370, N392–L412, P428–V448, N470–L490, A511–F531, I544–A564, V569–V589, and M608–V628.

The protein localises to the cell membrane. It carries out the reaction D-fructose(out) + N(pros)-phospho-L-histidyl-[protein] = D-fructose 1-phosphate(in) + L-histidyl-[protein]. The phosphoenolpyruvate-dependent sugar phosphotransferase system (sugar PTS), a major carbohydrate active transport system, catalyzes the phosphorylation of incoming sugar substrates concomitantly with their translocation across the cell membrane. This system is involved in fructose transport. This is PTS system fructose-specific EIIABC component (fruA) from Bacillus subtilis (strain 168).